A 122-amino-acid polypeptide reads, in one-letter code: Large ribosomal subunit protein uL14 (122 aa).

Belongs to the universal ribosomal protein uL14 family. As to quaternary structure, part of the 50S ribosomal subunit. Forms a cluster with proteins L3 and L19. In the 70S ribosome, L14 and L19 interact and together make contacts with the 16S rRNA in bridges B5 and B8.

In terms of biological role, binds to 23S rRNA. Forms part of two intersubunit bridges in the 70S ribosome. The chain is Large ribosomal subunit protein uL14 from Brucella abortus (strain 2308).